The following is a 108-amino-acid chain: MRPLKQAIYSSRTADKFVVRLPDGMRERIAEVARNHHRSMNSEIIARLEQSLIQEGALGEELSMRLDSPELSLHERELLQRFRQLSHRQQNALVSLIAHDAEMAADAT.

Functions both as a transcriptional activator and a repressor of multiple genes encoding virulence factors as well as genes involved in environmental adaptation. Represses genes involved in iron homeostasis. Modulates intracellular levels of c-di-GMP which in turn regulates swimming motility and biofilm formation. In Pseudomonas ogarae (strain DSM 112162 / CECT 30235 / F113), this protein is Transcription factor AmrZ.